The sequence spans 352 residues: tRNA (guanine-N(1)-)-methyltransferase (352 aa).

S-adenosyl-L-methionine is bound by residues Gly-109 and 129–134 (IGDYVL).

The protein belongs to the RNA methyltransferase TrmD family. Homodimer.

The protein localises to the cytoplasm. It carries out the reaction guanosine(37) in tRNA + S-adenosyl-L-methionine = N(1)-methylguanosine(37) in tRNA + S-adenosyl-L-homocysteine + H(+). Its function is as follows. Specifically methylates guanosine-37 in various tRNAs. This is tRNA (guanine-N(1)-)-methyltransferase from Chlamydia trachomatis serovar L2 (strain ATCC VR-902B / DSM 19102 / 434/Bu).